The chain runs to 237 residues: Lectin ConGF (237 aa).

2 residues coordinate Mn(2+): Glu8 and Asp10. Ca(2+)-binding residues include Asp10, Tyr12, Asn14, and Asp19. Asn14 is an a carbohydrate binding site. Mn(2+) is bound by residues Asp19 and His24. A carbohydrate-binding residues include Leu99, Tyr100, Asp208, and Arg228.

The protein belongs to the leguminous lectin family. As to quaternary structure, homotetramer; dimer of dimers. Concanavalin A-like lectins of the Diocleinae subtribe undergo proteolytic processing referred to as circular permutation. The propeptide is split into an N-terminal and a C-terminal part, the gamma and beta chain, respectively. These are then religated in beta-gamma order to form the mature alpha chain. The beta and gamma chains can often be detected in cell extracts. Residues 1-118 of the mature chain, as displayed here, probably constitute the beta chain in the propeptide, residues 119-237 the gamma chain.

Functionally, lectin. Induces paw edema in mice. Has a weak vasorelaxant effect on rat aorta. Has anti-inflammatory and anti-nociceptive effects. This Canavalia grandiflora (Jackbean) protein is Lectin ConGF.